The sequence spans 525 residues: tRNA-splicing endonuclease subunit Sen54 (525 aa).

N-acetylmethionine is present on Met-1. Positions 1 to 46 (MEPEPEPGSVEVPAGRVLSASELRAARSRSQKLPQRSHGPKDFLPD) are disordered. Low complexity predominate over residues 7–23 (PGSVEVPAGRVLSASEL). Ser-178 carries the post-translational modification Phosphoserine. At Tyr-180 the chain carries Phosphotyrosine. A compositionally biased stretch (low complexity) spans 220–232 (LPPVSLAASSSPA). Positions 220 to 273 (LPPVSLAASSSPACDQSSQYPEEKSQDSSPRQGSELPLQFLGSSEPCSDLARED) are disordered.

The protein belongs to the SEN54 family. In terms of assembly, tRNA splicing endonuclease is a heterotetramer composed of TSEN2, TSEN15, TSEN34/LENG5 and TSEN54. tRNA splicing endonuclease complex also contains proteins of the pre-mRNA 3'-end processing machinery such as CLP1, CPSF1, CPSF4 and CSTF2.

It is found in the nucleus. Its subcellular location is the nucleolus. In terms of biological role, non-catalytic subunit of the tRNA-splicing endonuclease complex, a complex responsible for identification and cleavage of the splice sites in pre-tRNA. It cleaves pre-tRNA at the 5' and 3' splice sites to release the intron. The products are an intron and two tRNA half-molecules bearing 2',3' cyclic phosphate and 5'-OH termini. There are no conserved sequences at the splice sites, but the intron is invariably located at the same site in the gene, placing the splice sites an invariant distance from the constant structural features of the tRNA body. The tRNA splicing endonuclease is also involved in mRNA processing via its association with pre-mRNA 3'-end processing factors, establishing a link between pre-tRNA splicing and pre-mRNA 3'-end formation, suggesting that the endonuclease subunits function in multiple RNA-processing events. This chain is tRNA-splicing endonuclease subunit Sen54 (Tsen54), found in Mus musculus (Mouse).